The following is a 238-amino-acid chain: Complement C1q-like protein 4 (238 aa).

An N-terminal signal peptide occupies residues 1–15; it reads MVLLLLVAIPLLVHS. The tract at residues 37–102 is disordered; it reads SRGQGPDGAP…PGPGPGGAAP (66 aa). Residues 53–96 enclose the Collagen-like domain; it reads PPGAKGEVGRRGKAGLRGPPGPPGPRGPPGEPGRPGPPGPPGPG. Positions 71–96 are enriched in pro residues; it reads PPGPPGPRGPPGEPGRPGPPGPPGPG. Residues 105 to 238 enclose the C1q domain; sequence GYVPRIAFYA…TFSGFIIYPD (134 aa).

Forms homooligomers, predominantly dimers or trimers. Forms heterooligomers with C1QL1, C1QL2 and C1QL3, when proteins are coexpressed; this interaction does not occur after secretion. Interacts with ADGRB3. As to expression, highly expressed in testis and adipose tissue, brown adipose tissue expressing higher levels than subcutaneous and visceral white adipose tissue. In gonadal fat pad, expressed at lower levels in adipocytes than in the stromal vascular fraction (VSP), which contains preadipocytes, fibroblasts, endothelial cells and occasional immune cells. Expression exhibits sexually dimorphism, with higher levels in females than in males.

Its subcellular location is the secreted. Functionally, may regulate the number of excitatory synapses that are formed on hippocampus neurons. Has no effect on inhibitory synapses. May inhibit adipocyte differentiation at an early stage of the process. In Mus musculus (Mouse), this protein is Complement C1q-like protein 4 (C1ql4).